We begin with the raw amino-acid sequence, 69 residues long: Cytochrome c oxidase subunit 8A, mitochondrial (69 aa).

The transit peptide at 1 to 25 directs the protein to the mitochondrion; sequence MSVLTPLLLRGLAGSARRLPVPRAQ. Positions 2 to 19 match the SIFI-degron motif; the sequence is SVLTPLLLRGLAGSARRL. Residues 26 to 36 lie on the Mitochondrial matrix side of the membrane; the sequence is IHSKPPREQLG. The helical transmembrane segment at 37–60 threads the bilayer; the sequence is TMDVAIGITSCFLCFLLPAGWVLS. At 61–69 the chain is on the mitochondrial intermembrane side; the sequence is HLESYKKRE.

The protein belongs to the cytochrome c oxidase VIII family. Component of the cytochrome c oxidase (complex IV, CIV), a multisubunit enzyme composed of 14 subunits. The complex is composed of a catalytic core of 3 subunits MT-CO1, MT-CO2 and MT-CO3, encoded in the mitochondrial DNA, and 11 supernumerary subunits COX4I, COX5A, COX5B, COX6A, COX6B, COX6C, COX7A, COX7B, COX7C, COX8 and NDUFA4, which are encoded in the nuclear genome. The complex exists as a monomer or a dimer and forms supercomplexes (SCs) in the inner mitochondrial membrane with NADH-ubiquinone oxidoreductase (complex I, CI) and ubiquinol-cytochrome c oxidoreductase (cytochrome b-c1 complex, complex III, CIII), resulting in different assemblies (supercomplex SCI(1)III(2)IV(1) and megacomplex MCI(2)III(2)IV(2)). In terms of processing, in response to mitochondrial stress, the precursor protein is ubiquitinated by the SIFI complex in the cytoplasm before mitochondrial import, leading to its degradation. Within the SIFI complex, UBR4 initiates ubiquitin chain that are further elongated or branched by KCMF1.

The protein resides in the mitochondrion inner membrane. Its pathway is energy metabolism; oxidative phosphorylation. In terms of biological role, component of the cytochrome c oxidase, the last enzyme in the mitochondrial electron transport chain which drives oxidative phosphorylation. The respiratory chain contains 3 multisubunit complexes succinate dehydrogenase (complex II, CII), ubiquinol-cytochrome c oxidoreductase (cytochrome b-c1 complex, complex III, CIII) and cytochrome c oxidase (complex IV, CIV), that cooperate to transfer electrons derived from NADH and succinate to molecular oxygen, creating an electrochemical gradient over the inner membrane that drives transmembrane transport and the ATP synthase. Cytochrome c oxidase is the component of the respiratory chain that catalyzes the reduction of oxygen to water. Electrons originating from reduced cytochrome c in the intermembrane space (IMS) are transferred via the dinuclear copper A center (CU(A)) of subunit 2 and heme A of subunit 1 to the active site in subunit 1, a binuclear center (BNC) formed by heme A3 and copper B (CU(B)). The BNC reduces molecular oxygen to 2 water molecules using 4 electrons from cytochrome c in the IMS and 4 protons from the mitochondrial matrix. This chain is Cytochrome c oxidase subunit 8A, mitochondrial (COX8A), found in Carlito syrichta (Philippine tarsier).